The primary structure comprises 542 residues: Phosphoglucomutase (542 aa).

Substrate contacts are provided by residues Thr17, Arg21, 112–113 (SH), and Lys125. Catalysis depends on Ser112, which acts as the Phosphoserine intermediate. Ser112 lines the Mg(2+) pocket. The Mg(2+) site is built by Asp276, Asp278, and Asp280. Substrate is bound by residues 280–281 (DR), Thr343, 362–364 (EES), Lys375, and Arg495.

The protein belongs to the phosphohexose mutase family. It depends on Mg(2+) as a cofactor.

It catalyses the reaction alpha-D-glucose 1-phosphate = alpha-D-glucose 6-phosphate. This enzyme participates in both the breakdown and synthesis of glucose. Required for the synthesis of capsular polysaccharide and normal lipopolysaccharide. The sequence is that of Phosphoglucomutase (pgm) from Rhizobium radiobacter (Agrobacterium tumefaciens).